The sequence spans 116 residues: ATP-dependent Clp protease adapter protein ClpS (116 aa).

The segment covering 1–11 (MRRINTIMQGK) has biased composition (polar residues). The tract at residues 1 to 23 (MRRINTIMQGKTNGGNGPESGTV) is disordered.

This sequence belongs to the ClpS family. Binds to the N-terminal domain of the chaperone ClpA.

In terms of biological role, involved in the modulation of the specificity of the ClpAP-mediated ATP-dependent protein degradation. The sequence is that of ATP-dependent Clp protease adapter protein ClpS from Brucella abortus (strain S19).